The chain runs to 367 residues: Phosphoribosylaminoimidazole-succinocarboxamide synthase (367 aa).

The protein belongs to the SAICAR synthetase family.

The catalysed reaction is 5-amino-1-(5-phospho-D-ribosyl)imidazole-4-carboxylate + L-aspartate + ATP = (2S)-2-[5-amino-1-(5-phospho-beta-D-ribosyl)imidazole-4-carboxamido]succinate + ADP + phosphate + 2 H(+). Its pathway is purine metabolism; IMP biosynthesis via de novo pathway; 5-amino-1-(5-phospho-D-ribosyl)imidazole-4-carboxamide from 5-amino-1-(5-phospho-D-ribosyl)imidazole-4-carboxylate: step 1/2. This is Phosphoribosylaminoimidazole-succinocarboxamide synthase from Shewanella baltica (strain OS155 / ATCC BAA-1091).